A 127-amino-acid polypeptide reads, in one-letter code: MDCRVVVEAAVPVYDVQSTDEAVRIAISKTGEMLNPDLNYVEIEMGSRSCPHCGTDTEPAFVAADESLVALELSMTVFNVERDEHAARIARKEIGQRLANIPLAVLEVDTVTDDDTQESTGGDTETA.

This sequence belongs to the UPF0212 family.

The polypeptide is UPF0212 protein VNG_1264C (Halobacterium salinarum (strain ATCC 700922 / JCM 11081 / NRC-1) (Halobacterium halobium)).